The sequence spans 124 residues: U13-hexatoxin-Mg1a (124 aa).

Residues 1–17 (MKLSALVFVASVMLVAA) form the signal peptide. Positions 18–52 (SPVKDVEEPVETHLAADLKTIEELAKYEEAAVQKR) are excised as a propeptide. 4 disulfides stabilise this stretch: Cys54/Cys72, Cys65/Cys78, Cys69/Cys116, and Cys71/Cys87.

In terms of tissue distribution, expressed by the venom gland.

The protein resides in the secreted. No toxicity is observed upon intracranial injection into mice and intrathorax injection into crickets. In Macrothele gigas (Japanese funnel web spider), this protein is U13-hexatoxin-Mg1a.